A 452-amino-acid polypeptide reads, in one-letter code: Tripartite motif-containing protein 49D (452 aa).

An RING-type zinc finger spans residues 15–56 (CPICLNYFIDPVTIDCGHSFCRPCFYLNWQDIPILTQCFECL). The segment at 88 to 129 (SEEQMCGTHRETKKIFCEVDRSLLCLLCSSSLEHRYHRHCPA) adopts a B box-type zinc-finger fold. Positions 93, 96, 115, and 121 each coordinate Zn(2+). Positions 269-452 (ELRAGPITGL…LRPIFCCVHL (184 aa)) constitute a B30.2/SPRY domain.

Belongs to the TRIM/RBCC family.

This is Tripartite motif-containing protein 49D from Homo sapiens (Human).